Consider the following 752-residue polypeptide: Photosystem I P700 chlorophyll a apoprotein A1 (752 aa).

Helical transmembrane passes span Ile73–Ala96, Leu159–His182, Met198–Leu222, Arg294–Tyr312, Trp349–Tyr372, Leu388–Val414, Ala436–His458, and Phe533–Leu551. [4Fe-4S] cluster-binding residues include Cys575 and Cys584. 2 consecutive transmembrane segments (helical) span residues His591–Trp612 and Leu666–Phe688. His677 is a chlorophyll a' binding site. Chlorophyll a-binding residues include Met685 and Tyr693. Trp694 contributes to the phylloquinone binding site. The helical transmembrane segment at Ala726 to Ala746 threads the bilayer.

This sequence belongs to the PsaA/PsaB family. As to quaternary structure, the PsaA/B heterodimer binds the P700 chlorophyll special pair and subsequent electron acceptors. PSI consists of a core antenna complex that captures photons, and an electron transfer chain that converts photonic excitation into a charge separation. The eukaryotic PSI reaction center is composed of at least 11 subunits. The cofactor is P700 is a chlorophyll a/chlorophyll a' dimer, A0 is one or more chlorophyll a, A1 is one or both phylloquinones and FX is a shared 4Fe-4S iron-sulfur center..

The protein localises to the plastid. It is found in the cyanelle thylakoid membrane. The catalysed reaction is reduced [plastocyanin] + hnu + oxidized [2Fe-2S]-[ferredoxin] = oxidized [plastocyanin] + reduced [2Fe-2S]-[ferredoxin]. In terms of biological role, psaA and PsaB bind P700, the primary electron donor of photosystem I (PSI), as well as the electron acceptors A0, A1 and FX. PSI is a cytochrome c6-ferredoxin oxidoreductase, converting photonic excitation into a charge separation, which transfers an electron from the donor P700 chlorophyll pair to the spectroscopically characterized acceptors A0, A1, FX, FA and FB in turn. Oxidized P700 is reduced on the lumenal side of the thylakoid membrane by cytochrome c6. This Cyanophora paradoxa protein is Photosystem I P700 chlorophyll a apoprotein A1.